A 135-amino-acid chain; its full sequence is Ribonuclease P protein component (135 aa).

The protein belongs to the RnpA family. In terms of assembly, consists of a catalytic RNA component (M1 or rnpB) and a protein subunit.

The enzyme catalyses Endonucleolytic cleavage of RNA, removing 5'-extranucleotides from tRNA precursor.. Its function is as follows. RNaseP catalyzes the removal of the 5'-leader sequence from pre-tRNA to produce the mature 5'-terminus. It can also cleave other RNA substrates such as 4.5S RNA. The protein component plays an auxiliary but essential role in vivo by binding to the 5'-leader sequence and broadening the substrate specificity of the ribozyme. The sequence is that of Ribonuclease P protein component from Pseudomonas paraeruginosa (strain DSM 24068 / PA7) (Pseudomonas aeruginosa (strain PA7)).